A 417-amino-acid chain; its full sequence is MGVRGALHLLLVCLSPALLSAVRINGDGQEVMYLAEGDNVRLGCPYLLDPEDLGTNSLDIEWMQVNSEPSHRENVFLTYQDKRIGHGNLPHLQQRVRFAASDPSQYDASINLMNLQVSDTATYECRVKKTTMATRKVIVTVQARPAVPMCWTEGHMSKGNDVVLKCFANGGSQPLSYKWAKISGHSHPYRAGAYHSQHSFHSELSYQESFHSTINQGLGNGDLLLKGINADDDGLYQCTVANHVGYSVCVVEVKVSDSQRVGMIVGAVLGSLLMLACLALGIWGLICCCCGGGGAGGARGAFGYGVGGGVGGGACGDLASEIRVDAEAPGCKASGRGSRVTHLLGYPTQNVSRSLRRKYAPPPCGGPEDVALVPRTASASCEAGPSPVYIKVKSAEPADCADCAQVEQRSCKDGLLV.

Positions 1 to 21 (MGVRGALHLLLVCLSPALLSA) are cleaved as a signal peptide. 2 consecutive Ig-like V-type domains span residues 22–140 (VRIN…VIVT) and 145–256 (PAVP…VKVS). At 22–262 (VRINGDGQEV…VKVSDSQRVG (241 aa)) the chain is on the extracellular side. Intrachain disulfides connect C44–C125 and C166–C238. Residues 263–283 (MIVGAVLGSLLMLACLALGIW) traverse the membrane as a helical segment. Topologically, residues 284–417 (GLICCCCGGG…QRSCKDGLLV (134 aa)) are cytoplasmic.

Its subcellular location is the membrane. This is V-set and immunoglobulin domain-containing protein 8 (Vsig8) from Mus musculus (Mouse).